The primary structure comprises 211 residues: Pyridoxine/pyridoxamine 5'-phosphate oxidase (211 aa).

Residues 7–10 (RREY) and Lys65 contribute to the substrate site. FMN-binding positions include 60–65 (RTVLLK), 75–76 (YT), Arg81, Lys82, and Gln104. Substrate is bound by residues Tyr122, Arg126, and Ser130. FMN is bound by residues 139–140 (QS) and Trp184. 190–192 (RLH) provides a ligand contact to substrate. Residue Arg194 coordinates FMN.

The protein belongs to the pyridoxamine 5'-phosphate oxidase family. In terms of assembly, homodimer. It depends on FMN as a cofactor.

The catalysed reaction is pyridoxamine 5'-phosphate + O2 + H2O = pyridoxal 5'-phosphate + H2O2 + NH4(+). It catalyses the reaction pyridoxine 5'-phosphate + O2 = pyridoxal 5'-phosphate + H2O2. It functions in the pathway cofactor metabolism; pyridoxal 5'-phosphate salvage; pyridoxal 5'-phosphate from pyridoxamine 5'-phosphate: step 1/1. The protein operates within cofactor metabolism; pyridoxal 5'-phosphate salvage; pyridoxal 5'-phosphate from pyridoxine 5'-phosphate: step 1/1. Its function is as follows. Catalyzes the oxidation of either pyridoxine 5'-phosphate (PNP) or pyridoxamine 5'-phosphate (PMP) into pyridoxal 5'-phosphate (PLP). The sequence is that of Pyridoxine/pyridoxamine 5'-phosphate oxidase from Aeromonas hydrophila subsp. hydrophila (strain ATCC 7966 / DSM 30187 / BCRC 13018 / CCUG 14551 / JCM 1027 / KCTC 2358 / NCIMB 9240 / NCTC 8049).